Consider the following 223-residue polypeptide: UPF0441 protein YgiB (223 aa).

Positions 201 to 223 (ESVAKQSAMQRSAAGTSTRSMGG) are disordered. Polar residues predominate over residues 204-223 (AKQSAMQRSAAGTSTRSMGG).

It belongs to the UPF0441 family.

In Salmonella arizonae (strain ATCC BAA-731 / CDC346-86 / RSK2980), this protein is UPF0441 protein YgiB.